The primary structure comprises 588 residues: Adenine deaminase (588 aa).

Belongs to the metallo-dependent hydrolases superfamily. Adenine deaminase family. In terms of assembly, homodimer. It depends on Mn(2+) as a cofactor.

It carries out the reaction adenine + H2O + H(+) = hypoxanthine + NH4(+). The sequence is that of Adenine deaminase from Escherichia coli O45:K1 (strain S88 / ExPEC).